We begin with the raw amino-acid sequence, 139 residues long: Putative general secretion pathway protein B (139 aa).

The chain crosses the membrane as a helical span at residues 28–48 (IIYVICLLLICLWFAGMVLVG). A disordered region spans residues 93–139 (VEEEDDPGVAVENAPSSSEDEENTVEESEEKAGLRERVKNALNELER). A compositionally biased stretch (acidic residues) spans 110-121 (SEDEENTVEESE). Residues 122–139 (EKAGLRERVKNALNELER) are compositionally biased toward basic and acidic residues.

The protein localises to the cell membrane. Part of a cryptic operon that encodes proteins involved in type II secretion pathway in other organisms, but is not expressed in strain K12 under standard laboratory conditions. May play a regulatory role under conditions of derepressed gsp gene expression. This Escherichia coli (strain K12) protein is Putative general secretion pathway protein B.